A 61-amino-acid chain; its full sequence is Large ribosomal subunit protein bL32 (61 aa).

Basic residues predominate over residues 1–16 (MAVPKRKTSPSKRGMR). The segment at 1–41 (MAVPKRKTSPSKRGMRRSADALKASTYVEDKNSGELRRPHH) is disordered. The span at 28–41 (VEDKNSGELRRPHH) shows a compositional bias: basic and acidic residues.

It belongs to the bacterial ribosomal protein bL32 family.

This Rhizobium rhizogenes (strain K84 / ATCC BAA-868) (Agrobacterium radiobacter) protein is Large ribosomal subunit protein bL32.